Reading from the N-terminus, the 453-residue chain is Homogentisate 1,2-dioxygenase (453 aa).

Positions 1–12 (MLEKAERQRKAA) are enriched in basic and acidic residues. Residues 1–43 (MLEKAERQRKAAPDQQRSAGYMPGFGNDFETESLPGSLPQGQN) are disordered. His-306 (proton acceptor) is an active-site residue. Fe cation contacts are provided by His-349 and Glu-355. Homogentisate contacts are provided by Tyr-364 and His-385. His-385 is a binding site for Fe cation.

Belongs to the homogentisate dioxygenase family. Hexamer; dimer of trimers. Requires Fe cation as cofactor.

It carries out the reaction homogentisate + O2 = 4-maleylacetoacetate + H(+). Its pathway is amino-acid degradation; L-phenylalanine degradation; acetoacetate and fumarate from L-phenylalanine: step 4/6. In terms of biological role, involved in the catabolism of homogentisate (2,5-dihydroxyphenylacetate or 2,5-OH-PhAc), a central intermediate in the degradation of phenylalanine and tyrosine. Catalyzes the oxidative ring cleavage of the aromatic ring of homogentisate to yield maleylacetoacetate. The sequence is that of Homogentisate 1,2-dioxygenase from Sinorhizobium medicae (strain WSM419) (Ensifer medicae).